The primary structure comprises 321 residues: Glucokinase (321 aa).

8–13 (GDVGGT) contributes to the ATP binding site.

Belongs to the bacterial glucokinase family.

The protein resides in the cytoplasm. The catalysed reaction is D-glucose + ATP = D-glucose 6-phosphate + ADP + H(+). The polypeptide is Glucokinase (Shigella boydii serotype 18 (strain CDC 3083-94 / BS512)).